Reading from the N-terminus, the 2556-residue chain is Ubiquitin carboxyl-terminal hydrolase 9Y (2556 aa).

The span at 1–33 (MTITTRGSPVGENESQGQTSDGQPQPSFQQNQI) shows a compositional bias: polar residues. Residues 1–68 (MTITTRGSPV…QHEEEDPSFP (68 aa)) form a disordered region. Over residues 34–44 (SSSDSSNETSP) the composition is skewed to low complexity. A Phosphoserine modification is found at S587. T589 is modified (phosphothreonine). Positions 971–999 (NMPSSPDSSSDSSAGPPGNHSHNNYRDVS) are disordered. A compositionally biased stretch (low complexity) spans 973-983 (PSSPDSSSDSS). Positions 1559 to 1958 (VGLKNAGATC…NAYILFYERM (400 aa)) constitute a USP domain. Residue C1568 is the Nucleophile of the active site. Zn(2+) is bound by residues C1729, H1731, C1773, and C1776. The active-site Proton acceptor is the H1881. S2447 carries the phosphoserine modification. The interval 2513 to 2556 (QNYVPEQPFSGPASHHLNNPQKNDKPQETHESNEEISSCLIKDQ) is disordered. Positions 2534–2545 (KNDKPQETHESN) are enriched in basic and acidic residues. S2549 is subject to Phosphoserine.

The protein belongs to the peptidase C19 family.

It carries out the reaction Thiol-dependent hydrolysis of ester, thioester, amide, peptide and isopeptide bonds formed by the C-terminal Gly of ubiquitin (a 76-residue protein attached to proteins as an intracellular targeting signal).. The protein operates within protein modification; protein ubiquitination. In terms of biological role, deubiquitinase that mediates deubiquitination of target proteins. May stabilize target proteins that are important for male germ cell development. This is Ubiquitin carboxyl-terminal hydrolase 9Y from Mus musculus (Mouse).